A 305-amino-acid polypeptide reads, in one-letter code: tRNA uridine(34) hydroxylase (305 aa).

Positions C126 to S220 constitute a Rhodanese domain. C180 acts as the Cysteine persulfide intermediate in catalysis.

The protein belongs to the TrhO family.

It carries out the reaction uridine(34) in tRNA + AH2 + O2 = 5-hydroxyuridine(34) in tRNA + A + H2O. Its function is as follows. Catalyzes oxygen-dependent 5-hydroxyuridine (ho5U) modification at position 34 in tRNAs. The chain is tRNA uridine(34) hydroxylase from Nostoc punctiforme (strain ATCC 29133 / PCC 73102).